Here is a 513-residue protein sequence, read N- to C-terminus: ATP synthase subunit alpha 2 (513 aa).

169–176 contacts ATP; that stretch reads GDRQVGKT.

This sequence belongs to the ATPase alpha/beta chains family. As to quaternary structure, F-type ATPases have 2 components, CF(1) - the catalytic core - and CF(0) - the membrane proton channel. CF(1) has five subunits: alpha(3), beta(3), gamma(1), delta(1), epsilon(1). CF(0) has three main subunits: a(1), b(2) and c(9-12). The alpha and beta chains form an alternating ring which encloses part of the gamma chain. CF(1) is attached to CF(0) by a central stalk formed by the gamma and epsilon chains, while a peripheral stalk is formed by the delta and b chains.

Its subcellular location is the cell inner membrane. It carries out the reaction ATP + H2O + 4 H(+)(in) = ADP + phosphate + 5 H(+)(out). In terms of biological role, produces ATP from ADP in the presence of a proton gradient across the membrane. The alpha chain is a regulatory subunit. The sequence is that of ATP synthase subunit alpha 2 from Psychromonas ingrahamii (strain DSM 17664 / CCUG 51855 / 37).